The following is a 226-amino-acid chain: 7-cyano-7-deazaguanine synthase (226 aa).

Residue 7–17 participates in ATP binding; it reads LSGGMDSLVTT. Zn(2+) contacts are provided by Cys187, Cys195, Cys198, and Cys201.

The protein belongs to the QueC family. Zn(2+) serves as cofactor.

The catalysed reaction is 7-carboxy-7-deazaguanine + NH4(+) + ATP = 7-cyano-7-deazaguanine + ADP + phosphate + H2O + H(+). It functions in the pathway purine metabolism; 7-cyano-7-deazaguanine biosynthesis. Functionally, catalyzes the ATP-dependent conversion of 7-carboxy-7-deazaguanine (CDG) to 7-cyano-7-deazaguanine (preQ(0)). This is 7-cyano-7-deazaguanine synthase from Chlorobium phaeobacteroides (strain DSM 266 / SMG 266 / 2430).